Reading from the N-terminus, the 158-residue chain is Transcription elongation factor GreA (158 aa).

A coiled-coil region spans residues 47 to 75 (ENSEYDAAKDEQAFVEQRITQVEKMIRNA).

This sequence belongs to the GreA/GreB family.

In terms of biological role, necessary for efficient RNA polymerase transcription elongation past template-encoded arresting sites. The arresting sites in DNA have the property of trapping a certain fraction of elongating RNA polymerases that pass through, resulting in locked ternary complexes. Cleavage of the nascent transcript by cleavage factors such as GreA or GreB allows the resumption of elongation from the new 3'terminus. GreA releases sequences of 2 to 3 nucleotides. The sequence is that of Transcription elongation factor GreA from Oceanobacillus iheyensis (strain DSM 14371 / CIP 107618 / JCM 11309 / KCTC 3954 / HTE831).